The following is a 1454-amino-acid chain: Probable cleavage and polyadenylation specificity factor subunit 1 (1454 aa).

A disordered region spans residues 810-843 (EEKEKKAKQTAAQEKEKETEKKKDDAKNEEDQVN). Residues 812–843 (KEKKAKQTAAQEKEKETEKKKDDAKNEEDQVN) are compositionally biased toward basic and acidic residues.

The protein belongs to the CPSF1 family. CPSF is a heterotetramer composed of four distinct subunits 160 (cpsf-1), 100 (cpsf-2), 70 (cpsf-3), and 30 kDa (cpsf-4).

The protein localises to the nucleus. Functionally, CPSF plays a key role in pre-mRNA 3'-end formation, recognizing the AAUAAA signal sequence and interacting with poly(A)polymerase and other factors to bring about cleavage and poly(A) addition. This subunit is involved in the RNA recognition step of the polyadenylation reaction. In Caenorhabditis briggsae, this protein is Probable cleavage and polyadenylation specificity factor subunit 1.